A 266-amino-acid chain; its full sequence is Glucosamine-6-phosphate deaminase (266 aa).

The active-site Proton acceptor; for enolization step is Asp-72. Residue Asp-141 is the For ring-opening step of the active site. His-143 serves as the catalytic Proton acceptor; for ring-opening step. Glu-148 functions as the For ring-opening step in the catalytic mechanism.

The protein belongs to the glucosamine/galactosamine-6-phosphate isomerase family. NagB subfamily. As to quaternary structure, homohexamer.

The catalysed reaction is alpha-D-glucosamine 6-phosphate + H2O = beta-D-fructose 6-phosphate + NH4(+). The protein operates within amino-sugar metabolism; N-acetylneuraminate degradation; D-fructose 6-phosphate from N-acetylneuraminate: step 5/5. Allosterically activated by N-acetylglucosamine 6-phosphate (GlcNAc6P). In terms of biological role, catalyzes the reversible isomerization-deamination of glucosamine 6-phosphate (GlcN6P) to form fructose 6-phosphate (Fru6P) and ammonium ion. In Yersinia pestis bv. Antiqua (strain Antiqua), this protein is Glucosamine-6-phosphate deaminase.